Reading from the N-terminus, the 389-residue chain is Mannitol-1-phosphate 5-dehydrogenase (389 aa).

An NAD(+)-binding site is contributed by 5–16; that stretch reads AIQFGGGNIGRG. The active site involves Lys214.

It belongs to the mannitol dehydrogenase family. In terms of assembly, monomer.

It carries out the reaction D-mannitol 1-phosphate + NAD(+) = beta-D-fructose 6-phosphate + NADH + H(+). Catalyzes the NAD(H)-dependent interconversion of D-fructose 6-phosphate and D-mannitol 1-phosphate in the mannitol metabolic pathway. This is Mannitol-1-phosphate 5-dehydrogenase from Talaromyces marneffei (strain ATCC 18224 / CBS 334.59 / QM 7333) (Penicillium marneffei).